Here is a 262-residue protein sequence, read N- to C-terminus: Hydroxyethylthiazole kinase (262 aa).

Met-43 is a substrate binding site. ATP-binding residues include Arg-118 and Thr-164. Ala-191 contacts substrate.

Belongs to the Thz kinase family. Requires Mg(2+) as cofactor.

The catalysed reaction is 5-(2-hydroxyethyl)-4-methylthiazole + ATP = 4-methyl-5-(2-phosphooxyethyl)-thiazole + ADP + H(+). It functions in the pathway cofactor biosynthesis; thiamine diphosphate biosynthesis; 4-methyl-5-(2-phosphoethyl)-thiazole from 5-(2-hydroxyethyl)-4-methylthiazole: step 1/1. Catalyzes the phosphorylation of the hydroxyl group of 4-methyl-5-beta-hydroxyethylthiazole (THZ). In Cereibacter sphaeroides (strain ATCC 17029 / ATH 2.4.9) (Rhodobacter sphaeroides), this protein is Hydroxyethylthiazole kinase.